The primary structure comprises 63 residues: Cytochrome c oxidase subunit 7C, mitochondrial (63 aa).

The N-terminal 16 residues, 1-16 (MWGQGVRRFTTSVVRR), are a transit peptide targeting the mitochondrion. The Mitochondrial matrix portion of the chain corresponds to 17 to 33 (SHYEEGPGKNLPFSVEN). The residue at position 25 (Lys-25) is an N6-acetyllysine; alternate. Lys-25 bears the N6-succinyllysine; alternate mark. A helical transmembrane segment spans residues 34–60 (KWRLLAMMTLYLGSGFAAPFFIVRHQL). The Mitochondrial intermembrane portion of the chain corresponds to 61 to 63 (LKK).

This sequence belongs to the cytochrome c oxidase VIIc family. As to quaternary structure, component of the cytochrome c oxidase (complex IV, CIV), a multisubunit enzyme composed of 14 subunits. The complex is composed of a catalytic core of 3 subunits MT-CO1, MT-CO2 and MT-CO3, encoded in the mitochondrial DNA, and 11 supernumerary subunits COX4I, COX5A, COX5B, COX6A, COX6B, COX6C, COX7A, COX7B, COX7C, COX8 and NDUFA4, which are encoded in the nuclear genome. The complex exists as a monomer or a dimer and forms supercomplexes (SCs) in the inner mitochondrial membrane with NADH-ubiquinone oxidoreductase (complex I, CI) and ubiquinol-cytochrome c oxidoreductase (cytochrome b-c1 complex, complex III, CIII), resulting in different assemblies (supercomplex SCI(1)III(2)IV(1) and megacomplex MCI(2)III(2)IV(2)). Interacts with RAB5IF.

It is found in the mitochondrion inner membrane. It functions in the pathway energy metabolism; oxidative phosphorylation. In terms of biological role, component of the cytochrome c oxidase, the last enzyme in the mitochondrial electron transport chain which drives oxidative phosphorylation. The respiratory chain contains 3 multisubunit complexes succinate dehydrogenase (complex II, CII), ubiquinol-cytochrome c oxidoreductase (cytochrome b-c1 complex, complex III, CIII) and cytochrome c oxidase (complex IV, CIV), that cooperate to transfer electrons derived from NADH and succinate to molecular oxygen, creating an electrochemical gradient over the inner membrane that drives transmembrane transport and the ATP synthase. Cytochrome c oxidase is the component of the respiratory chain that catalyzes the reduction of oxygen to water. Electrons originating from reduced cytochrome c in the intermembrane space (IMS) are transferred via the dinuclear copper A center (CU(A)) of subunit 2 and heme A of subunit 1 to the active site in subunit 1, a binuclear center (BNC) formed by heme A3 and copper B (CU(B)). The BNC reduces molecular oxygen to 2 water molecules using 4 electrons from cytochrome c in the IMS and 4 protons from the mitochondrial matrix. This is Cytochrome c oxidase subunit 7C, mitochondrial (COX7C) from Carlito syrichta (Philippine tarsier).